The following is a 288-amino-acid chain: Glutamate racemase (288 aa).

Substrate is bound by residues 10–11 (DS) and 42–43 (YG). Residue cysteine 73 is the Proton donor/acceptor of the active site. Substrate is bound at residue 74–75 (NT). Cysteine 184 (proton donor/acceptor) is an active-site residue. 185-186 (TH) serves as a coordination point for substrate.

Belongs to the aspartate/glutamate racemases family.

The enzyme catalyses L-glutamate = D-glutamate. It functions in the pathway cell wall biogenesis; peptidoglycan biosynthesis. Its function is as follows. Provides the (R)-glutamate required for cell wall biosynthesis. This is Glutamate racemase from Corynebacterium kroppenstedtii (strain DSM 44385 / JCM 11950 / CIP 105744 / CCUG 35717).